The chain runs to 224 residues: Putative adhesin RF_1314 (224 aa).

A signal peptide spans 1 to 22 (MKKLLLIAATSATILSSSISFA).

The chain is Putative adhesin RF_1314 from Rickettsia felis (strain ATCC VR-1525 / URRWXCal2) (Rickettsia azadi).